Here is a 432-residue protein sequence, read N- to C-terminus: Glutamyl-tRNA reductase (432 aa).

Residues 55–58 (TCNR), serine 114, 119–121 (ETQ), and glutamine 125 contribute to the substrate site. Cysteine 56 acts as the Nucleophile in catalysis. 194–199 (GAGEMI) lines the NADP(+) pocket.

This sequence belongs to the glutamyl-tRNA reductase family. Homodimer.

The enzyme catalyses (S)-4-amino-5-oxopentanoate + tRNA(Glu) + NADP(+) = L-glutamyl-tRNA(Glu) + NADPH + H(+). The protein operates within porphyrin-containing compound metabolism; protoporphyrin-IX biosynthesis; 5-aminolevulinate from L-glutamyl-tRNA(Glu): step 1/2. Its function is as follows. Catalyzes the NADPH-dependent reduction of glutamyl-tRNA(Glu) to glutamate 1-semialdehyde (GSA). In Burkholderia thailandensis (strain ATCC 700388 / DSM 13276 / CCUG 48851 / CIP 106301 / E264), this protein is Glutamyl-tRNA reductase.